The primary structure comprises 437 residues: ATP-dependent RNA helicase RhlB (437 aa).

The Q motif motif lies at 9–37 (KKFADFPLHKEVQQALNEVGFEFCTPIQA). Positions 40-219 (LPILLAKKDI…YDHMNEPEKV (180 aa)) constitute a Helicase ATP-binding domain. 53–60 (AQTGTGKT) provides a ligand contact to ATP. The short motif at 165-168 (DEAD) is the DEAD box element. The Helicase C-terminal domain maps to 243–390 (KMPLLLSLLE…VTSYDSEALL (148 aa)). A disordered region spans residues 394-437 (PAPKRIHRKPSSHSRNSRDRSGSRPQGGHRGNAPRRHDKTRRHS). Residues 425–437 (NAPRRHDKTRRHS) show a composition bias toward basic residues.

Belongs to the DEAD box helicase family. RhlB subfamily. Component of the RNA degradosome, which is a multiprotein complex involved in RNA processing and mRNA degradation.

It localises to the cytoplasm. The enzyme catalyses ATP + H2O = ADP + phosphate + H(+). Functionally, DEAD-box RNA helicase involved in RNA degradation. Has RNA-dependent ATPase activity and unwinds double-stranded RNA. This Shewanella piezotolerans (strain WP3 / JCM 13877) protein is ATP-dependent RNA helicase RhlB.